We begin with the raw amino-acid sequence, 428 residues long: 3-phosphoshikimate 1-carboxyvinyltransferase (428 aa).

3-phosphoshikimate-binding residues include Lys-23, Ser-24, and Arg-28. Lys-23 contacts phosphoenolpyruvate. 2 residues coordinate phosphoenolpyruvate: Gly-97 and Arg-125. 3-phosphoshikimate is bound by residues Ser-170, Ser-171, Gln-172, Ser-198, Asp-314, Asn-337, and Lys-341. Phosphoenolpyruvate is bound at residue Gln-172. Asp-314 (proton acceptor) is an active-site residue. Positions 345, 387, and 412 each coordinate phosphoenolpyruvate.

Belongs to the EPSP synthase family. As to quaternary structure, monomer.

It localises to the cytoplasm. The catalysed reaction is 3-phosphoshikimate + phosphoenolpyruvate = 5-O-(1-carboxyvinyl)-3-phosphoshikimate + phosphate. It participates in metabolic intermediate biosynthesis; chorismate biosynthesis; chorismate from D-erythrose 4-phosphate and phosphoenolpyruvate: step 6/7. Its function is as follows. Catalyzes the transfer of the enolpyruvyl moiety of phosphoenolpyruvate (PEP) to the 5-hydroxyl of shikimate-3-phosphate (S3P) to produce enolpyruvyl shikimate-3-phosphate and inorganic phosphate. In Serratia proteamaculans (strain 568), this protein is 3-phosphoshikimate 1-carboxyvinyltransferase.